Reading from the N-terminus, the 341-residue chain is Myb-related transcription factor, partner of profilin (341 aa).

Residues 8–80 (VTRLRKPRFS…EVQKRWNDFK (73 aa)) enclose the Myb-like domain. Disordered regions lie at residues 84–103 (KEKLARVPHSTQSGTAEEAM), 180–210 (LPHLTPSPDPSECPSPPPPGSGTPLLTPSGV), and 309–341 (AEPPRSPSPPPPNKRKRFGYLSQRKRRGRWKNL). Residues 184 to 200 (TPSPDPSECPSPPPPGS) show a composition bias toward pro residues. Residues 321-341 (NKRKRFGYLSQRKRRGRWKNL) show a composition bias toward basic residues.

It is found in the nucleus. Transcriptional repressor; DNA-binding protein that specifically recognizes the core sequence 5'-YAAC[GT]G-3'. The protein is Myb-related transcription factor, partner of profilin (mypop) of Xenopus laevis (African clawed frog).